The chain runs to 215 residues: N-(5'-phosphoribosyl)anthranilate isomerase (215 aa).

Belongs to the TrpF family.

It catalyses the reaction N-(5-phospho-beta-D-ribosyl)anthranilate = 1-(2-carboxyphenylamino)-1-deoxy-D-ribulose 5-phosphate. The protein operates within amino-acid biosynthesis; L-tryptophan biosynthesis; L-tryptophan from chorismate: step 3/5. The sequence is that of N-(5'-phosphoribosyl)anthranilate isomerase from Sinorhizobium medicae (strain WSM419) (Ensifer medicae).